The primary structure comprises 95 residues: uncharacterized protein (95 aa).

Residues 1–73 (MAHFKDDLQT…AQQPSMRTEL (73 aa)) are disordered. Composition is skewed to polar residues over residues 42–52 (SNHSPSVQESP) and 62–73 (GSAQQPSMRTEL).

This is an uncharacterized protein from Homo sapiens (Human).